The following is a 160-amino-acid chain: MVPKLFTSQICLLLLLGLMGVEGSLHARPPQFTRAQWFAIQHISLNPPRCTIAMRAINNYRWRCKNQNTFLRTTFANVVNVCGNQSIRCPHNRTLNNCHRSRFRVPLLHCDLINPGAQNISNCTYADRPGRRFYVVACDNRDPRDSPRYPVVPVHLDTTI.

Residues 1 to 27 (MVPKLFTSQICLLLLLGLMGVEGSLHA) form the signal peptide. The required for nearly all of the bactericidal activity; partially involved in LPS-binding and bacterial membrane depolarization stretch occupies residues 28–72 (RPPQFTRAQWFAIQHISLNPPRCTIAMRAINNYRWRCKNQNTFLR). His42 (proton acceptor) is an active-site residue. Disulfide bonds link Cys50–Cys110, Cys64–Cys123, Cys82–Cys138, and Cys89–Cys98. Tyr60 is modified (3'-nitrotyrosine). A substrate-binding site is contributed by 65 to 69 (KNQNT). N-linked (GlcNAc...) asparagine glycans are attached at residues Asn84, Asn92, and Asn119. The active-site Proton donor is the His155.

The protein belongs to the pancreatic ribonuclease family. As to quaternary structure, interacts with bacterial lipopolysaccharide (LPS) and lipoteichoic acid (LTA). In vitro interacts with and insert into lipid bilayers composed of dioleoyl phosphatidylcholine and dioleoyl phosphatidylglycerol. In vitro, tends to form amyloid-like aggregates at pH 3, but not at pH 5, nor 7.

Its subcellular location is the secreted. Functionally, cytotoxin and helminthotoxin with low-efficiency ribonuclease activity. Possesses a wide variety of biological activities. Exhibits antibacterial activity, including cytoplasmic membrane depolarization of preferentially Gram-negative, but also Gram-positive strains. Promotes E.coli outer membrane detachment, alteration of the overall cell shape and partial loss of cell content. This is Eosinophil cationic protein (RNASE3) from Homo sapiens (Human).